A 734-amino-acid chain; its full sequence is Probable inactive histone-lysine N-methyltransferase SUVR1 (734 aa).

The interval 61 to 163 (QSTEKNKKEE…LPPLKRYVRR (103 aa)) is disordered. Basic and acidic residues predominate over residues 62-81 (STEKNKKEEEKKKKEEEKKS). Acidic residues predominate over residues 98 to 109 (VQDEEDDMDEDE). Residues 113 to 122 (KRRLRSRRGR) are compositionally biased toward basic residues. Residues 123–132 (ASSSSSSSSS) are compositionally biased toward low complexity. 8 residues coordinate Zn(2+): cysteine 460, cysteine 464, cysteine 468, cysteine 477, cysteine 545, cysteine 549, cysteine 551, and cysteine 555. Residues 460 to 563 (CSTSCIEDCL…RCGNRVVQRG (104 aa)) form the Pre-SET domain. The 131-residue stretch at 566-696 (NKLQVFFTPN…AMEELAWDYG (131 aa)) folds into the SET domain. S-adenosyl-L-methionine-binding positions include 577 to 579 (KGW) and 652 to 653 (NH). Cysteine 655 provides a ligand contact to Zn(2+). Tyrosine 695 lines the S-adenosyl-L-methionine pocket. One can recognise a Post-SET domain in the interval 707–723 (KPFDCLCGSRFCRNKKR). Cysteine 711, cysteine 713, and cysteine 718 together coordinate Zn(2+).

It belongs to the class V-like SAM-binding methyltransferase superfamily. Histone-lysine methyltransferase family. Interacts with SUVR2 and itself.

It localises to the nucleus. It is found in the chromosome. In terms of biological role, probable inactive histone-lysine methyltransferase that acts as regulator of transctiptional gene silencing independently of histone H3K9 methylation. Contributes to transcriptional gene silencing at RNA-directed DNA methylation (RdDM) target loci but also at RdDM-independent target loci. This chain is Probable inactive histone-lysine N-methyltransferase SUVR1 (SUVR1), found in Arabidopsis thaliana (Mouse-ear cress).